The sequence spans 237 residues: MRQHVNPLSRFFQLPLELPAPEQLFDDPGRPIHLDIGCARGICLQELAALRPDRNHLGVEIRRPLVRSAQRDRDQLERLNLHYLFCNANVSLEGWMAALPQDRLQLVSIQFPDPWFKRRHRKRRVLQPSLLLAIAATLQPGRELFVQSDVLAVIDPMVALVELSGCFDRPAEDARPWRADNPLPVPTERERYVQELGLPAYRVLYRRNRQPLPDPEELEIAWQRVDNPANDAVPPDG.

S-adenosyl-L-methionine-binding residues include Asp-35, Glu-60, Asn-87, and Asp-113. Residue Asp-113 is part of the active site. Residues Lys-117 and Asp-149 each coordinate substrate.

Belongs to the class I-like SAM-binding methyltransferase superfamily. TrmB family.

It catalyses the reaction guanosine(46) in tRNA + S-adenosyl-L-methionine = N(7)-methylguanosine(46) in tRNA + S-adenosyl-L-homocysteine. It functions in the pathway tRNA modification; N(7)-methylguanine-tRNA biosynthesis. Its function is as follows. Catalyzes the formation of N(7)-methylguanine at position 46 (m7G46) in tRNA. This Synechococcus sp. (strain WH7803) protein is tRNA (guanine-N(7)-)-methyltransferase.